The chain runs to 274 residues: Large ribosomal subunit protein uL2 (274 aa).

The tract at residues 224–274 is disordered; it reads VAMNPVDHPHGGGEGRTSGGRHPVTPWGIPTKGYKTRRNKRSNKLIVQKRK. Over residues 257–274 the composition is skewed to basic residues; sequence YKTRRNKRSNKLIVQKRK.

This sequence belongs to the universal ribosomal protein uL2 family. In terms of assembly, part of the 50S ribosomal subunit. Forms a bridge to the 30S subunit in the 70S ribosome.

In terms of biological role, one of the primary rRNA binding proteins. Required for association of the 30S and 50S subunits to form the 70S ribosome, for tRNA binding and peptide bond formation. It has been suggested to have peptidyltransferase activity; this is somewhat controversial. Makes several contacts with the 16S rRNA in the 70S ribosome. This is Large ribosomal subunit protein uL2 from Francisella tularensis subsp. mediasiatica (strain FSC147).